Consider the following 294-residue polypeptide: NAD kinase (294 aa).

D74 serves as the catalytic Proton acceptor. NAD(+) is bound by residues 74–75, K79, 149–150, D179, 190–195, and A214; these read DG, NE, and TGYSLS.

This sequence belongs to the NAD kinase family. Requires a divalent metal cation as cofactor.

The protein localises to the cytoplasm. The enzyme catalyses NAD(+) + ATP = ADP + NADP(+) + H(+). Functionally, involved in the regulation of the intracellular balance of NAD and NADP, and is a key enzyme in the biosynthesis of NADP. Catalyzes specifically the phosphorylation on 2'-hydroxyl of the adenosine moiety of NAD to yield NADP. The protein is NAD kinase of Christiangramia forsetii (strain DSM 17595 / CGMCC 1.15422 / KT0803) (Gramella forsetii).